The sequence spans 158 residues: Transcription elongation factor GreA (158 aa).

The stretch at 46 to 66 (AEYEAAKERQGFIEGRISELE) forms a coiled coil.

It belongs to the GreA/GreB family.

In terms of biological role, necessary for efficient RNA polymerase transcription elongation past template-encoded arresting sites. The arresting sites in DNA have the property of trapping a certain fraction of elongating RNA polymerases that pass through, resulting in locked ternary complexes. Cleavage of the nascent transcript by cleavage factors such as GreA or GreB allows the resumption of elongation from the new 3'terminus. GreA releases sequences of 2 to 3 nucleotides. In Neisseria meningitidis serogroup B (strain ATCC BAA-335 / MC58), this protein is Transcription elongation factor GreA.